The primary structure comprises 419 residues: Interferon regulatory factor 3 (419 aa).

T3 carries the post-translational modification Phosphothreonine. Residues 5-111 (KPRILPWLIS…DPHKIYEFVT (107 aa)) constitute a DNA-binding region (IRF tryptophan pentad repeat). Residue S14 is modified to Phosphoserine. T75 carries the phosphothreonine modification. A phosphoserine mark is found at S97 and S123. Residues 118–137 (PEPDTSLDLSGRYSTSDTHE) form a disordered region. The mediates interaction with ZDHHC11 stretch occupies residues 140 to 419 (LDKLLSGMDL…LRDLVEDMDF (280 aa)). Residue K191 forms a Glycyl lysine isopeptide (Lys-Gly) (interchain with G-Cter in ISG15) linkage. The tract at residues 198–358 (DEWEFQVTVF…SWPQDEPWVK (161 aa)) is interaction with HERC5. 2 positions are modified to phosphothreonine: T235 and T251. An intrachain disulfide couples C265 to C287. Residues K358 and K364 each participate in a glycyl lysine isopeptide (Lys-Gly) (interchain with G-Cter in ISG15) cross-link. K364 bears the N6-acetyllysine mark. Phosphoserine is present on S383. S384 carries the diphosphoserine modification. The residue at position 384 (S384) is a Phosphoserine; by TBK1. At S394 the chain carries Phosphoserine; by IKKE. At S396 the chain carries Phosphoserine. Phosphothreonine is present on T402.

This sequence belongs to the IRF family. Monomer. Homodimer; phosphorylation-induced. Interacts (when phosphorylated) with CREBBP. Interacts with MAVS (via phosphorylated pLxIS motif). Interacts with TICAM1 (via phosphorylated pLxIS motif). Interacts with STING1 (via phosphorylated pLxIS motif). Interacts with IKBKE and TBK1. Interacts with TICAM2. Interacts with RBCK1. Interacts with HERC5. Interacts with DDX3X; the interaction allows the phosphorylation and activation of IRF3 by IKBKE. Interacts with TRIM21 and ULK1, in the presence of TRIM21; this interaction leads to IRF3 degradation by autophagy. Interacts with RIOK3; RIOK3 probably mediates the interaction of TBK1 with IRF3. Interacts with ILRUN; the interaction inhibits IRF3 binding to its DNA consensus sequence. Interacts with LYAR; this interaction impairs IRF3 DNA-binding activity. Interacts with TRAF3. Interacts with ZDHHC11; ZDHHC11 recruits IRF3 to STING1 upon DNA virus infection and thereby promotes IRF3 activation. Interacts with HSP90AA1; the interaction mediates IRF3 association with TOMM70. Interacts with BCL2; the interaction decreases upon Sendai virus infection. Interacts with BAX; the interaction is direct, increases upon virus infection and mediates the formation of the apoptosis complex TOMM70:HSP90AA1:IRF3:BAX. Interacts with DDX56. Interacts with NBR1. As to quaternary structure, (Microbial infection) Interacts with Porcine epidemic diarrhea virus E protein; this interaction prevents IRF3 translocation to the nucleus and thereby prevents type I interferon production. In terms of assembly, (Microbial infection) Interacts with African swine fever virus (ASFV) P14.5/E120R; this interaction interferes with the recruitment of IRF3 to TBK1, which in turn suppresses IRF3 phosphorylation, decreasing interferon production via the cGAS/STING pathway. (Microbial infection) Interacts with African swine fever virus (ASFV) MGF360-14L; this interaction mediates degradation of IRF3 through TRIM21 and ubiquitin-meditated proteolysis. As to quaternary structure, (Microbial infection) Interacts with African swine fever virus (ASFV) E301R; this interaction inhibits nuclear translocation of IRF3 to the nucleus. In terms of assembly, (Microbial infection) Interacts with African swine fever virus (ASFV) minor capsid protein M1249L; this interaction mediates IRF3 degradation. Post-translationally, constitutively phosphorylated on many Ser/Thr residues. Activated following phosphorylation by TBK1 and IKBKE. Innate adapter proteins, such as MAVS, STING1 or TICAM1, are first activated by viral RNA, cytosolic DNA, and bacterial lipopolysaccharide (LPS), respectively, leading to activation of the kinases TBK1 and IKBKE. These kinases then phosphorylate the adapter proteins on the pLxIS motif, leading to recruitment of IRF3, thereby licensing IRF3 for phosphorylation by TBK1. Phosphorylation at Ser-384 is followed by pyrophosphorylation at the same residue, promoting phosphorylation at Ser-394. Phosphorylated IRF3 dissociates from the adapter proteins, dimerizes, and then enters the nucleus to induce IFNs. In terms of processing, pyrophosphorylated by UAP1 following phosphorylation at Ser-384 by TBK1. Pyrophosphorylation promotes subsequent phosphorylation at Ser-394, leading to homodimerization of IRF3. Acetylation at Lys-364 by KAT8 inhibits recruimtent to promoters and transcription factor activity. Acetylation by KAT8 is promoted by phosphorylation at Ser-394. Post-translationally, ubiquitinated; ubiquitination involves RBCK1 leading to proteasomal degradation. Polyubiquitinated; ubiquitination involves TRIM21 leading to proteasomal degradation. Ubiquitinated by UBE3C, leading to its degradation. Deubiquitinated by USP5 on both 'Lys-48'-linked unanchored and 'Lys-63'-linked anchored polyubiquitin, leading to inhibition of antiviral innate immunity. In terms of processing, ISGylated by HERC5 resulting in sustained IRF3 activation and in the inhibition of IRF3 ubiquitination by disrupting PIN1 binding. The phosphorylation state of IRF3 does not alter ISGylation. (Microbial infection) Phosphorylated by pseudorabies virus protein kinase UL13; leading to decreased IRF3 binding to the IRF3-responsive promoters and downstream ISG expression. Post-translationally, proteolytically cleaved by apoptotic caspases during apoptosis, leading to its inactivation. Cleavage by CASP3 during virus-induced apoptosis inactivates it, preventing cytokine overproduction.

It is found in the cytoplasm. The protein resides in the nucleus. The protein localises to the mitochondrion. With respect to regulation, in the absence of viral infection, maintained as a monomer in an autoinhibited state. Phosphorylation by TBK1 and IKBKE disrupts this autoinhibition leading to the liberation of the DNA-binding and dimerization activities and its nuclear localization where it can activate type I IFN and ISG genes. Phosphorylation and activation follow the following steps: innate adapter proteins, such as MAVS, STING1 or TICAM1, are first activated by viral RNA, cytosolic DNA and bacterial lipopolysaccharide (LPS), respectively, leading to activation of the kinases TBK1 and IKBKE. These kinases then phosphorylate the adapter proteins on their pLxIS motif, leading to recruitment of IRF3, thereby licensing IRF3 for phosphorylation by TBK1. Phosphorylated IRF3 dissociates from the adapter proteins, dimerizes, and then enters the nucleus to induce IFNs. Key transcriptional regulator of type I interferon (IFN)-dependent immune responses which plays a critical role in the innate immune response against DNA and RNA viruses. Regulates the transcription of type I IFN genes (IFN-alpha and IFN-beta) and IFN-stimulated genes (ISG) by binding to an interferon-stimulated response element (ISRE) in their promoters. Acts as a more potent activator of the IFN-beta (IFNB) gene than the IFN-alpha (IFNA) gene and plays a critical role in both the early and late phases of the IFNA/B gene induction. Found in an inactive form in the cytoplasm of uninfected cells and following viral infection, double-stranded RNA (dsRNA), or toll-like receptor (TLR) signaling, is phosphorylated by IKBKE and TBK1 kinases. This induces a conformational change, leading to its dimerization and nuclear localization and association with CREB binding protein (CREBBP) to form dsRNA-activated factor 1 (DRAF1), a complex which activates the transcription of the type I IFN and ISG genes. Can activate distinct gene expression programs in macrophages and can induce significant apoptosis in primary macrophages. This is Interferon regulatory factor 3 (IRF3) from Sus scrofa (Pig).